A 448-amino-acid polypeptide reads, in one-letter code: Probable glycine dehydrogenase (decarboxylating) subunit 1 (448 aa).

Belongs to the GcvP family. N-terminal subunit subfamily. In terms of assembly, the glycine cleavage system is composed of four proteins: P, T, L and H. In this organism, the P 'protein' is a heterodimer of two subunits.

The catalysed reaction is N(6)-[(R)-lipoyl]-L-lysyl-[glycine-cleavage complex H protein] + glycine + H(+) = N(6)-[(R)-S(8)-aminomethyldihydrolipoyl]-L-lysyl-[glycine-cleavage complex H protein] + CO2. Its function is as follows. The glycine cleavage system catalyzes the degradation of glycine. The P protein binds the alpha-amino group of glycine through its pyridoxal phosphate cofactor; CO(2) is released and the remaining methylamine moiety is then transferred to the lipoamide cofactor of the H protein. This chain is Probable glycine dehydrogenase (decarboxylating) subunit 1, found in Bacillus licheniformis (strain ATCC 14580 / DSM 13 / JCM 2505 / CCUG 7422 / NBRC 12200 / NCIMB 9375 / NCTC 10341 / NRRL NRS-1264 / Gibson 46).